The primary structure comprises 83 residues: DNA-directed RNA polymerase subunit omega (83 aa).

This sequence belongs to the RNA polymerase subunit omega family. As to quaternary structure, the RNAP catalytic core consists of 2 alpha, 1 beta, 1 beta' and 1 omega subunit. When a sigma factor is associated with the core the holoenzyme is formed, which can initiate transcription.

The enzyme catalyses RNA(n) + a ribonucleoside 5'-triphosphate = RNA(n+1) + diphosphate. Its function is as follows. Promotes RNA polymerase assembly. Latches the N- and C-terminal regions of the beta' subunit thereby facilitating its interaction with the beta and alpha subunits. This chain is DNA-directed RNA polymerase subunit omega, found in Chromohalobacter salexigens (strain ATCC BAA-138 / DSM 3043 / CIP 106854 / NCIMB 13768 / 1H11).